Here is a 643-residue protein sequence, read N- to C-terminus: Phosphatidylinositol-3,5-bisphosphate 3-phosphatase MTMR2 (643 aa).

Composition is skewed to polar residues over residues 1–12 (MEKSSSCESLGS) and 23–40 (DSLS…VHTK). Residues 1–56 (MEKSSSCESLGSQPAAARPPSVDSLSSASTSHSENSVHTKSASVVSSDSISTSADN) form a disordered region. Phosphoserine occurs at positions 6 and 9. Residues 41 to 55 (SASVVSSDSISTSAD) show a composition bias toward low complexity. S58 bears the Phosphoserine mark. Residues 68-139 (NKLAEMEEPP…GVINRVEKIG (72 aa)) enclose the GRAM domain. The Myotubularin phosphatase domain maps to 205–580 (GWKLYDPLLE…RHLELWVGYY (376 aa)). 3 residues coordinate a 1,2-diacyl-sn-glycero-3-phospho-(1D-myo-inositol-3,5-bisphosphate): N330, N355, and I356. A 1,2-diacyl-sn-glycero-3-phospho-(1D-myo-inositol-3-phosphate) is bound by residues N330, N355, and I356. The active-site Phosphocysteine intermediate is C417. The a 1,2-diacyl-sn-glycero-3-phospho-(1D-myo-inositol-3,5-bisphosphate) site is built by S418, D419, G420, W421, D422, R423, R459, and R463. The a 1,2-diacyl-sn-glycero-3-phospho-(1D-myo-inositol-3-phosphate) site is built by S418, D419, G420, W421, D422, and R423. Residue R463 participates in a 1,2-diacyl-sn-glycero-3-phospho-(1D-myo-inositol-3-phosphate) binding. Residues 593–627 (IHNRYKELLAKRAELQKKVEELQREISNRSTSSSE) are a coiled coil. Residues 615 to 643 (QREISNRSTSSSERASSPAQCVTPVQTVV) are disordered. Positions 620 to 631 (NRSTSSSERASS) are enriched in low complexity. Polar residues predominate over residues 632–643 (PAQCVTPVQTVV).

Belongs to the protein-tyrosine phosphatase family. Non-receptor class myotubularin subfamily. As to quaternary structure, homodimer (via coiled-coil domain). Heterotetramer consisting of one MTMR2 dimer and one SBF2/MTMR13 dimer; specifically in peripheral nerves stabilizes SBF2/MTMR13 at the membranes and increases MTMR2 catalytic activity towards phosphatidylinositol 3,5-bisphosphate and to a lesser extent towards phosphatidylinositol 3-phosphate. Heterodimer with SBF1/MTMR5; acts as an adapter for the phosphatase MTMR2 to regulate MTMR2 catalytic activity and subcellular location. Heterodimer with MTMR12. Phosphorylation at Ser-58 decreases MTMR2 localization to endocytic vesicular structures.

It localises to the cytoplasm. Its subcellular location is the early endosome membrane. The protein localises to the perinuclear region. The protein resides in the cell projection. It is found in the axon. It localises to the endosome membrane. The enzyme catalyses a 1,2-diacyl-sn-glycero-3-phospho-(1D-myo-inositol-3,5-bisphosphate) + H2O = a 1,2-diacyl-sn-glycero-3-phospho-(1D-myo-inositol-5-phosphate) + phosphate. It carries out the reaction a 1,2-diacyl-sn-glycero-3-phospho-(1D-myo-inositol-3-phosphate) + H2O = a 1,2-diacyl-sn-glycero-3-phospho-(1D-myo-inositol) + phosphate. The catalysed reaction is 1,2-dioctanoyl-sn-glycero-3-phospho-(1-D-myo-inositol-3-phosphate) + H2O = 1,2-dioctanoyl-sn-glycero-3-phospho-(1D-myo-inositol) + phosphate. It catalyses the reaction 1,2-dioctanoyl-sn-glycero-3-phospho-(1D-myo-inositol-3,5-bisphosphate) + H2O = 1,2-dioctanoyl-sn-glycero-3-phospho-(1D-myo-inositol-5-phosphate) + phosphate. In terms of biological role, lipid phosphatase that specifically dephosphorylates the D-3 position of phosphatidylinositol 3-phosphate and phosphatidylinositol 3,5-bisphosphate, generating phosphatidylinositol and phosphatidylinositol 5-phosphate. Regulates the level of these phosphoinositides critical for various biological processes including autophagy initiation and autophagosome maturation. In Homo sapiens (Human), this protein is Phosphatidylinositol-3,5-bisphosphate 3-phosphatase MTMR2.